We begin with the raw amino-acid sequence, 551 residues long: Membrane protein insertase YidC (551 aa).

Residues Ala-3–Gly-23 form a helical membrane-spanning segment. Residues Asn-33 to Asn-55 are disordered. A run of 3 helical transmembrane segments spans residues Leu-361–Tyr-381, Leu-431–Leu-451, and Val-504–Val-524.

Belongs to the OXA1/ALB3/YidC family. Type 1 subfamily. As to quaternary structure, interacts with the Sec translocase complex via SecD. Specifically interacts with transmembrane segments of nascent integral membrane proteins during membrane integration.

The protein localises to the cell inner membrane. Required for the insertion and/or proper folding and/or complex formation of integral membrane proteins into the membrane. Involved in integration of membrane proteins that insert both dependently and independently of the Sec translocase complex, as well as at least some lipoproteins. Aids folding of multispanning membrane proteins. This Francisella tularensis subsp. holarctica (strain OSU18) protein is Membrane protein insertase YidC.